We begin with the raw amino-acid sequence, 238 residues long: Ribosomal RNA small subunit methyltransferase G (238 aa).

S-adenosyl-L-methionine contacts are provided by residues Gly77, Phe82, 128–129 (AE), and Arg147.

Belongs to the methyltransferase superfamily. RNA methyltransferase RsmG family.

It localises to the cytoplasm. Its function is as follows. Specifically methylates the N7 position of guanine in position 535 of 16S rRNA. This chain is Ribosomal RNA small subunit methyltransferase G, found in Exiguobacterium sp. (strain ATCC BAA-1283 / AT1b).